Consider the following 962-residue polypeptide: Leucine-rich repeat-containing G-protein coupled receptor 6 (962 aa).

Positions 1–16 (MLVVLLILHAVSCAHS) are cleaved as a signal peptide. An LRRNT domain is found at 20-60 (PGAAVPVKQCPSACQCEEDGILLLVDCSEQGLSSVPTDLSP). LRR repeat units follow at residues 38–58 (DGILLLVDCSEQGLSSVPTDL), 59–82 (SPLTSYLDLSMNNISEIQPNAFRN), 83–106 (LHFLSELRLSGNHLRHIPGPMLQG), 107–131 (LYNLKVLMLQNNQLERLPSEDPWEL), 133–154 (NLLSLRLDANLIMEVPARTLSG), 155–178 (MRSLRHLWLDDNALTEIPVSALND), 179–202 (LSSLQAMTLALNRITLIPDYAFRN), 203–226 (LSNLVVLHLHNNMIRTLGQNCFEG), 228–250 (HSLETLELNFNDLQEFPVAIRTL), 251–273 (AKLQELGFHNNNIKAIPERAFVG), 275–297 (PLLQTIHFYENPIQFVGRSAFQF), 298–321 (LPKLHTLSLNGATEIREFPDLKGT), 322–344 (TSLQVLTLTRAGLTSLPYDLCHL), 345–368 (LPKLKVLELSHNVIEELPSFYHCT), 370–390 (LQEIGLQHNLIKQIEMNTFQQ), 391–414 (LGSLRSLDLSWNSINSIHPDAFFS), and 416–438 (QSLIKLDLTGNRLSNLPMTGLTS). N-linked (GlcNAc...) asparagine glycosylation occurs at N71. N-linked (GlcNAc...) asparagine glycosylation is present at N202. Transmembrane regions (helical) follow at residues 559–579 (GMWLISLVSLMGNSLLILTVF), 590–610 (FIIGTISGANLLTGLCTGTLA), 647–669 (SILFLTLAAVQCSVSVSCARAYG), 679–699 (AAAVACLALSLAVAALPLIGV), 723–743 (FMVALIMMNSLCFLVITGTYI), 766–786 (VAWLIFTNCLLYCPVAFLTFS), and 801–821 (SVVLVLLPLPASINPLLYLLF). C633 and C708 are joined by a disulfide.

This sequence belongs to the G-protein coupled receptor 1 family.

The protein localises to the cell membrane. Its function is as follows. Receptor for R-spondins that potentiates the canonical Wnt signaling pathway. Upon binding to R-spondins (rspo1, rspo2, rspo3 or rspo4), associates with phosphorylated lrp6 and frizzled receptors that are activated by extracellular Wnt receptors, triggering the canonical Wnt signaling pathway to increase expression of target genes. In contrast to classical G-protein coupled receptors, does not activate heterotrimeric G-proteins to transduce the signal. This is Leucine-rich repeat-containing G-protein coupled receptor 6 (lgr6) from Danio rerio (Zebrafish).